The following is a 240-amino-acid chain: Cilia- and flagella-associated protein 77 (240 aa).

It belongs to the CFAP77 family.

It localises to the cytoplasm. Its subcellular location is the cytoskeleton. It is found in the cilium axoneme. The protein resides in the flagellum axoneme. Microtubule inner protein (MIP) part of the dynein-decorated doublet microtubules (DMTs) in cilia axoneme, which is required for motile cilia beating. The chain is Cilia- and flagella-associated protein 77 from Danio rerio (Zebrafish).